The sequence spans 152 residues: Large ribosomal subunit protein bL9 (152 aa).

This sequence belongs to the bacterial ribosomal protein bL9 family.

Functionally, binds to the 23S rRNA. The polypeptide is Large ribosomal subunit protein bL9 (Prochlorococcus marinus (strain MIT 9313)).